Here is a 193-residue protein sequence, read N- to C-terminus: Ribosomal RNA small subunit methyltransferase G (193 aa).

Residues glycine 62, phenylalanine 67, 111 to 112, and arginine 125 each bind S-adenosyl-L-methionine; that span reads IE.

It belongs to the methyltransferase superfamily. RNA methyltransferase RsmG family.

The protein localises to the cytoplasm. The catalysed reaction is guanosine(527) in 16S rRNA + S-adenosyl-L-methionine = N(7)-methylguanosine(527) in 16S rRNA + S-adenosyl-L-homocysteine. Its function is as follows. Specifically methylates the N7 position of guanine in position 527 of 16S rRNA. The chain is Ribosomal RNA small subunit methyltransferase G from Gluconobacter oxydans (strain 621H) (Gluconobacter suboxydans).